A 186-amino-acid polypeptide reads, in one-letter code: Large ribosomal subunit protein uL5 (186 aa).

It belongs to the universal ribosomal protein uL5 family. As to quaternary structure, part of the 50S ribosomal subunit; part of the 5S rRNA/L5/L18/L25 subcomplex. Contacts the 5S rRNA and the P site tRNA. Forms a bridge to the 30S subunit in the 70S ribosome.

This is one of the proteins that bind and probably mediate the attachment of the 5S RNA into the large ribosomal subunit, where it forms part of the central protuberance. In the 70S ribosome it contacts protein S13 of the 30S subunit (bridge B1b), connecting the 2 subunits; this bridge is implicated in subunit movement. Contacts the P site tRNA; the 5S rRNA and some of its associated proteins might help stabilize positioning of ribosome-bound tRNAs. The sequence is that of Large ribosomal subunit protein uL5 from Cereibacter sphaeroides (strain ATCC 17029 / ATH 2.4.9) (Rhodobacter sphaeroides).